A 146-amino-acid chain; its full sequence is Hemoglobin subunit beta (146 aa).

The Globin domain occupies 2–146 (FLTAEEKSLV…VANALAHKYH (145 aa)). S44 carries the post-translational modification Phosphoserine. The residue at position 59 (K59) is an N6-acetyllysine. A heme b-binding site is contributed by H63. K82 is modified (N6-acetyllysine). H92 contacts heme b. C93 is subject to S-nitrosocysteine. K144 carries the N6-acetyllysine modification.

This sequence belongs to the globin family. In terms of assembly, heterotetramer of two alpha chains and two beta chains. In terms of tissue distribution, red blood cells.

Functionally, involved in oxygen transport from the lung to the various peripheral tissues. The polypeptide is Hemoglobin subunit beta (HBB) (Proteles cristata (Aardwolf)).